We begin with the raw amino-acid sequence, 514 residues long: Endoglucanase MaCel5A (514 aa).

The first 23 residues, 1–23 (MKRILFTAGGCLFYLLLAVKAYA), serve as a signal peptide directing secretion. Low complexity-rich tracts occupy residues 91–114 (GSSS…SGSG) and 179–201 (SSSS…SSSG). Disordered regions lie at residues 91 to 118 (GSSS…SSSG) and 179 to 208 (SSSS…GGDS). E346 (proton donor) is an active-site residue. The active-site Nucleophile is E439.

Belongs to the glycosyl hydrolase 5 (cellulase A) family.

The enzyme catalyses Endohydrolysis of (1-&gt;4)-beta-D-glucosidic linkages in cellulose, lichenin and cereal beta-D-glucans.. Exhibits strong halostability and halotolerance. The activity increases about tenfold in the presence of 0.5 M NaCl, and about fivefold in the presence of 4.0 M NaCl. Tolerates detergents, but activity is decreased in the presence of EDTA. Activity is enhanced in the presence of Mn(2+), Ca(2+), Ba(2+) or Mg(2+), and decreased in the presence of Zn(2+), Cu(2+), Al(3+) or Fe(3+). Endoglucanase that exhibits highest activity toward barley beta-glucan, lower activity toward carboxymethyl cellulose (CMC-Na), and marginal activity toward laminarin and xylan. The chain is Endoglucanase MaCel5A from Microbulbifer sp. (strain ALW1).